A 454-amino-acid polypeptide reads, in one-letter code: UPF0210 protein BL1209 (454 aa).

Belongs to the UPF0210 family. Homodimer.

The chain is UPF0210 protein BL1209 from Bifidobacterium longum (strain NCC 2705).